We begin with the raw amino-acid sequence, 55 residues long: uncharacterized protein (55 aa).

A disordered region spans residues Met1–Asn25. The helical transmembrane segment at Thr35–Phe55 threads the bilayer.

It localises to the membrane. This is an uncharacterized protein from Bacillus subtilis (strain 168).